The following is a 28-amino-acid chain: Phospholipase A2 (28 aa).

Glycine 28 is a Ca(2+) binding site.

The cofactor is Ca(2+). Expressed by the venom gland.

It is found in the secreted. It carries out the reaction a 1,2-diacyl-sn-glycero-3-phosphocholine + H2O = a 1-acyl-sn-glycero-3-phosphocholine + a fatty acid + H(+). Its function is as follows. PLA2 catalyzes the calcium-dependent hydrolysis of the 2-acyl groups in 3-sn-phosphoglycerides. The polypeptide is Phospholipase A2 (Scolopendra dehaani (Thai centipede)).